The chain runs to 1365 residues: DNA-directed RNA polymerase subunit beta'' (1365 aa).

Residues Cys-224, Cys-295, Cys-302, and Cys-305 each coordinate Zn(2+).

The protein belongs to the RNA polymerase beta' chain family. RpoC2 subfamily. As to quaternary structure, in plastids the minimal PEP RNA polymerase catalytic core is composed of four subunits: alpha, beta, beta', and beta''. When a (nuclear-encoded) sigma factor is associated with the core the holoenzyme is formed, which can initiate transcription. It depends on Zn(2+) as a cofactor.

The protein localises to the plastid. Its subcellular location is the chloroplast. It catalyses the reaction RNA(n) + a ribonucleoside 5'-triphosphate = RNA(n+1) + diphosphate. Functionally, DNA-dependent RNA polymerase catalyzes the transcription of DNA into RNA using the four ribonucleoside triphosphates as substrates. The polypeptide is DNA-directed RNA polymerase subunit beta'' (Fagopyrum esculentum subsp. ancestrale (Wild buckwheat)).